The chain runs to 440 residues: MFLAQEIIRKKRDGHALSDEEIRFFINGIRDNTISEGQIAALAMTIFFHDMSIPERVSLTMAMRDSGSVLDWKSLNLNGPIVDKHSTGGVGDVTSLMLGPMVAACGGYIPMISGRGLGHTGGTLDKLEAIPGFDIFPNDTRFREIIKDVGVAIIGQTSSLAPADKRFYATRDITATVDSIPLITASILAKKLAEGLDALVMDVKVGSGAFMPTFELSAALAEAIVGVSNGAGVRTTALLTDMNQVLASSAGNAVEVREAVQFLTGEYRNPRLFDVTMALCVEMLISGKLAKDDAEARAKLQAVLDNGKAAEIFGRMVAAQKGPNDFVENYAKYLPTAMLSKAVYADTEGFVSAMDTRALGMAVVSMGGGRRQASDTIDYSVGFTDMARLGDSVDGQRPLAVIHAKDENSWQEAAKAVKAAIQLDDKAPETTPTVYRRITD.

This sequence belongs to the thymidine/pyrimidine-nucleoside phosphorylase family. Homodimer.

It carries out the reaction thymidine + phosphate = 2-deoxy-alpha-D-ribose 1-phosphate + thymine. It participates in pyrimidine metabolism; dTMP biosynthesis via salvage pathway; dTMP from thymine: step 1/2. Its function is as follows. The enzymes which catalyze the reversible phosphorolysis of pyrimidine nucleosides are involved in the degradation of these compounds and in their utilization as carbon and energy sources, or in the rescue of pyrimidine bases for nucleotide synthesis. The polypeptide is Thymidine phosphorylase (Enterobacter sp. (strain 638)).